A 338-amino-acid chain; its full sequence is Ketol-acid reductoisomerase (NADP(+)) (338 aa).

Residues 1–181 enclose the KARI N-terminal Rossmann domain; sequence MKVFYDKDAD…GGGRAGIIET (181 aa). NADP(+)-binding positions include 24 to 27, Arg-47, and Ser-52; that span reads YGSQ. Residue His-107 is part of the active site. Residue Gly-133 participates in NADP(+) binding. In terms of domain architecture, KARI C-terminal knotted spans 182–327; the sequence is NFREETETDL…SKLRAMMPWI (146 aa). Mg(2+) is bound by residues Asp-190, Glu-194, Glu-226, and Glu-230. Ser-251 is a substrate binding site.

The protein belongs to the ketol-acid reductoisomerase family. Mg(2+) serves as cofactor.

It catalyses the reaction (2R)-2,3-dihydroxy-3-methylbutanoate + NADP(+) = (2S)-2-acetolactate + NADPH + H(+). The catalysed reaction is (2R,3R)-2,3-dihydroxy-3-methylpentanoate + NADP(+) = (S)-2-ethyl-2-hydroxy-3-oxobutanoate + NADPH + H(+). It participates in amino-acid biosynthesis; L-isoleucine biosynthesis; L-isoleucine from 2-oxobutanoate: step 2/4. The protein operates within amino-acid biosynthesis; L-valine biosynthesis; L-valine from pyruvate: step 2/4. In terms of biological role, involved in the biosynthesis of branched-chain amino acids (BCAA). Catalyzes an alkyl-migration followed by a ketol-acid reduction of (S)-2-acetolactate (S2AL) to yield (R)-2,3-dihydroxy-isovalerate. In the isomerase reaction, S2AL is rearranged via a Mg-dependent methyl migration to produce 3-hydroxy-3-methyl-2-ketobutyrate (HMKB). In the reductase reaction, this 2-ketoacid undergoes a metal-dependent reduction by NADPH to yield (R)-2,3-dihydroxy-isovalerate. The protein is Ketol-acid reductoisomerase (NADP(+)) of Burkholderia mallei (strain NCTC 10229).